Here is a 118-residue protein sequence, read N- to C-terminus: UPF0102 protein DICTH_1420 (118 aa).

The protein belongs to the UPF0102 family.

This chain is UPF0102 protein DICTH_1420, found in Dictyoglomus thermophilum (strain ATCC 35947 / DSM 3960 / H-6-12).